The sequence spans 539 residues: uncharacterized protein (539 aa).

Position 6 to 20 (6 to 20 (LIIGGGGAAARAAIE)) interacts with FAD. Catalysis depends on residues H227 and R243.

This sequence belongs to the FAD-dependent oxidoreductase 2 family. FRD/SDH subfamily. The cofactor is FAD.

This is an uncharacterized protein from Methanocaldococcus jannaschii (strain ATCC 43067 / DSM 2661 / JAL-1 / JCM 10045 / NBRC 100440) (Methanococcus jannaschii).